A 542-amino-acid chain; its full sequence is Chaperonin GroEL (542 aa).

ATP-binding positions include 30–33 (TLGP), Lys-51, 87–91 (DGTTT), Gly-415, 480–482 (NAA), and Asp-496.

The protein belongs to the chaperonin (HSP60) family. In terms of assembly, forms a cylinder of 14 subunits composed of two heptameric rings stacked back-to-back. Interacts with the co-chaperonin GroES.

It localises to the cytoplasm. It catalyses the reaction ATP + H2O + a folded polypeptide = ADP + phosphate + an unfolded polypeptide.. Functionally, together with its co-chaperonin GroES, plays an essential role in assisting protein folding. The GroEL-GroES system forms a nano-cage that allows encapsulation of the non-native substrate proteins and provides a physical environment optimized to promote and accelerate protein folding. The chain is Chaperonin GroEL from Tremblaya princeps.